The following is a 341-amino-acid chain: N-acetyl-gamma-glutamyl-phosphate reductase (341 aa).

Cysteine 146 is a catalytic residue.

It belongs to the NAGSA dehydrogenase family. Type 1 subfamily.

The protein localises to the cytoplasm. The catalysed reaction is N-acetyl-L-glutamate 5-semialdehyde + phosphate + NADP(+) = N-acetyl-L-glutamyl 5-phosphate + NADPH + H(+). Its pathway is amino-acid biosynthesis; L-arginine biosynthesis; N(2)-acetyl-L-ornithine from L-glutamate: step 3/4. In terms of biological role, catalyzes the NADPH-dependent reduction of N-acetyl-5-glutamyl phosphate to yield N-acetyl-L-glutamate 5-semialdehyde. The sequence is that of N-acetyl-gamma-glutamyl-phosphate reductase from Limosilactobacillus fermentum (strain NBRC 3956 / LMG 18251) (Lactobacillus fermentum).